We begin with the raw amino-acid sequence, 696 residues long: Elongation factor G 2 (696 aa).

The region spanning 5-281 (SKYRNIGIFA…AVVDYLPSPT (277 aa)) is the tr-type G domain. Residues 14–21 (AHVDAGKT), 78–82 (DTPGH), and 132–135 (NKLD) each bind GTP.

It belongs to the TRAFAC class translation factor GTPase superfamily. Classic translation factor GTPase family. EF-G/EF-2 subfamily.

It is found in the cytoplasm. Functionally, catalyzes the GTP-dependent ribosomal translocation step during translation elongation. During this step, the ribosome changes from the pre-translocational (PRE) to the post-translocational (POST) state as the newly formed A-site-bound peptidyl-tRNA and P-site-bound deacylated tRNA move to the P and E sites, respectively. Catalyzes the coordinated movement of the two tRNA molecules, the mRNA and conformational changes in the ribosome. This Vibrio parahaemolyticus serotype O3:K6 (strain RIMD 2210633) protein is Elongation factor G 2.